Here is a 1022-residue protein sequence, read N- to C-terminus: Dihydropyrimidine dehydrogenase [NADP(+)] (1022 aa).

The disordered stretch occupies residues 26 to 45; that stretch reads ANVHSTASKKNEKKHWKRNP. One can recognise a 4Fe-4S ferredoxin-type 1 domain in the interval 69-100; it reads ERGALREALRCLKCADAPCQKSCPTNLDIKSF. 4 residues coordinate [4Fe-4S] cluster: Cys79, Cys82, Cys87, and Cys91. Val129 is a binding site for FAD. [4Fe-4S] cluster contacts are provided by Cys130, Cys136, Cys140, and Gln156. Residues 194–198, 218–226, Arg235, and Leu261 contribute to the FAD site; these read GCGPA and EKQKYIGGL. NADP(+) is bound by residues 340 to 343, 364 to 365, Arg371, 437 to 439, and 481 to 487; these read AGDT, RK, AFG, and DIAGFAN. 480–489 provides a ligand contact to FAD; the sequence is GDIAGFANTT. FMN-binding positions include Ser550 and 574 to 575; that span reads KT. Substrate-binding positions include Asn609 and 668-670; that span reads NLS. The active-site Proton acceptor is Cys671. Lys709 is an FMN binding site. Substrate is bound at residue 736 to 737; the sequence is NT. Residues Gly767, 793 to 795, and 816 to 817 contribute to the FMN site; these read TGG and CS. 2 4Fe-4S ferredoxin-type domains span residues 943–975 and 976–1006; these read VQAL…FDPE and THLP…MVSR. [4Fe-4S] cluster is bound by residues Cys952, Cys955, Cys958, Cys962, Cys985, Cys988, Cys991, and Cys995.

It belongs to the dihydropyrimidine dehydrogenase family. Homodimer. FAD serves as cofactor. Requires FMN as cofactor. [4Fe-4S] cluster is required as a cofactor.

It localises to the cytoplasm. The enzyme catalyses 5,6-dihydrouracil + NADP(+) = uracil + NADPH + H(+). The catalysed reaction is 5,6-dihydrothymine + NADP(+) = thymine + NADPH + H(+). It functions in the pathway amino-acid biosynthesis; beta-alanine biosynthesis. Functionally, involved in pyrimidine base degradation. Catalyzes the reduction of uracil and thymine. Also involved the degradation of the chemotherapeutic drug 5-fluorouracil. The chain is Dihydropyrimidine dehydrogenase [NADP(+)] (dpyd) from Danio rerio (Zebrafish).